A 414-amino-acid polypeptide reads, in one-letter code: Serine hydroxymethyltransferase (414 aa).

Residues L118 and 122 to 124 (GHL) contribute to the (6S)-5,6,7,8-tetrahydrofolate site. K226 carries the post-translational modification N6-(pyridoxal phosphate)lysine. Residue 353–355 (SPF) participates in (6S)-5,6,7,8-tetrahydrofolate binding.

Belongs to the SHMT family. Homodimer. The cofactor is pyridoxal 5'-phosphate.

The protein localises to the cytoplasm. The enzyme catalyses (6R)-5,10-methylene-5,6,7,8-tetrahydrofolate + glycine + H2O = (6S)-5,6,7,8-tetrahydrofolate + L-serine. The protein operates within one-carbon metabolism; tetrahydrofolate interconversion. It functions in the pathway amino-acid biosynthesis; glycine biosynthesis; glycine from L-serine: step 1/1. Catalyzes the reversible interconversion of serine and glycine with tetrahydrofolate (THF) serving as the one-carbon carrier. This reaction serves as the major source of one-carbon groups required for the biosynthesis of purines, thymidylate, methionine, and other important biomolecules. Also exhibits THF-independent aldolase activity toward beta-hydroxyamino acids, producing glycine and aldehydes, via a retro-aldol mechanism. The polypeptide is Serine hydroxymethyltransferase (Blochmanniella floridana).